The following is a 93-amino-acid chain: Cell division topological specificity factor (93 aa).

It belongs to the MinE family.

Prevents the cell division inhibition by proteins MinC and MinD at internal division sites while permitting inhibition at polar sites. This ensures cell division at the proper site by restricting the formation of a division septum at the midpoint of the long axis of the cell. This Halorhodospira halophila (strain DSM 244 / SL1) (Ectothiorhodospira halophila (strain DSM 244 / SL1)) protein is Cell division topological specificity factor.